A 65-amino-acid polypeptide reads, in one-letter code: Prokaryotic ubiquitin-like protein UBact (65 aa).

Residues 1–17 (MEVNMPTTEQGQKNKQM) show a composition bias toward polar residues. Positions 1-65 (MEVNMPTTEQ…ARRYRQRTGE (65 aa)) are disordered. Over residues 35-65 (KVEKPNTEEILKRMRKVDPDQARRYRQRTGE) the composition is skewed to basic and acidic residues. Residue Glu-65 forms an Isoglutamyl lysine isopeptide (Glu-Lys) (interchain with K-? in acceptor proteins) linkage.

It belongs to the ubiquitin-like protein UBact family.

In terms of biological role, may function as a protein modifier covalently attached to lysine residues of substrate proteins. This may serve to target the modified proteins for degradation by proteasomes. In Methylacidiphilum infernorum (isolate V4) (Methylokorus infernorum (strain V4)), this protein is Prokaryotic ubiquitin-like protein UBact.